A 128-amino-acid polypeptide reads, in one-letter code: Fluoride-specific ion channel FluC (128 aa).

4 helical membrane passes run 5 to 25 (IVAI…LSLA), 35 to 55 (LGTL…AVVF), 67 to 87 (LFVI…SVEV), and 96 to 116 (FGWA…LTAL). Residues glycine 75 and threonine 78 each coordinate Na(+).

The protein belongs to the fluoride channel Fluc/FEX (TC 1.A.43) family.

The protein localises to the cell inner membrane. The catalysed reaction is fluoride(in) = fluoride(out). Its activity is regulated as follows. Na(+) is not transported, but it plays an essential structural role and its presence is essential for fluoride channel function. In terms of biological role, fluoride-specific ion channel. Important for reducing fluoride concentration in the cell, thus reducing its toxicity. The protein is Fluoride-specific ion channel FluC of Burkholderia lata (strain ATCC 17760 / DSM 23089 / LMG 22485 / NCIMB 9086 / R18194 / 383).